The primary structure comprises 358 residues: Aromatic amino acid aminotransferase (358 aa).

K219 is modified (N6-(pyridoxal phosphate)lysine).

The protein belongs to the class-II pyridoxal-phosphate-dependent aminotransferase family. In terms of assembly, homodimer. The cofactor is pyridoxal 5'-phosphate.

The catalysed reaction is an aromatic L-alpha-amino acid + 2-oxoglutarate = an aromatic oxo-acid + L-glutamate. Functionally, aminotransferase that catalyzes the conversion of aromatic amino acids and 2-oxoglutarate into corresponding aromatic oxo acids and L-glutamate. The chain is Aromatic amino acid aminotransferase from Nocardia farcinica (strain IFM 10152).